A 276-amino-acid polypeptide reads, in one-letter code: uncharacterized protein (276 aa).

It to E.coli YjfZ.

This is an uncharacterized protein from Escherichia coli (strain K12).